We begin with the raw amino-acid sequence, 913 residues long: Eukaryotic translation initiation factor 3 subunit C (913 aa).

Residues 1 to 44 are disordered; it reads MSRFFTTGSDSESESSLSGEELVTKPVGGNYGKQPLLLSEDEED. Residues 8-21 show a composition bias toward low complexity; sequence GSDSESESSLSGEE. 7 positions are modified to phosphoserine: serine 9, serine 11, serine 13, serine 15, serine 16, serine 18, and serine 39. Lysine 99 is modified (N6-acetyllysine). Disordered regions lie at residues 157-301 and 522-542; these read TSYK…GGEW and QLTPPEGSSKSEQDQAENEGE. Serine 166, serine 178, serine 181, and serine 182 each carry phosphoserine. Positions 166-190 are enriched in acidic residues; it reads SADEDAEKNEEDSEGSSDEDEDEDG. A compositionally biased stretch (basic and acidic residues) spans 199–216; that stretch reads KKSEAPSGESRKFLKKMD. Residues 217-232 show a composition bias toward acidic residues; sequence DEDEDSEDSEDDEDWD. The span at 261–278 shows a compositional bias: basic and acidic residues; sequence PTTDEDKKAAEKKREDKA. Positions 522-531 are enriched in polar residues; it reads QLTPPEGSSK. Threonine 524 carries the phosphothreonine modification. Lysine 643 bears the N6-acetyllysine mark. A PCI domain is found at 673–849; it reads FHLHINLELL…QTVVMHRTEP (177 aa). Positions 885-913 are disordered; the sequence is FRDQKDGYRKNEGYMRRGGYRQQQSQTAY. A compositionally biased stretch (basic and acidic residues) spans 886–899; that stretch reads RDQKDGYRKNEGYM. Phosphoserine is present on serine 909.

In terms of assembly, component of the eukaryotic translation initiation factor 3 (eIF-3) complex, which is composed of 13 subunits: EIF3A, EIF3B, EIF3C, EIF3D, EIF3E, EIF3F, EIF3G, EIF3H, EIF3I, EIF3J, EIF3K, EIF3L and EIF3M. The eIF-3 complex appears to include 3 stable modules: module A is composed of EIF3A, EIF3B, EIF3G and EIF3I; module B is composed of EIF3F, EIF3H, and EIF3M; and module C is composed of EIF3C, EIF3D, EIF3E, EIF3K and EIF3L. EIF3C of module C binds EIF3B of module A and EIF3H of module B, thereby linking the three modules. EIF3J is a labile subunit that binds to the eIF-3 complex via EIF3B. The eIF-3 complex interacts with RPS6KB1 under conditions of nutrient depletion. Mitogenic stimulation leads to binding and activation of a complex composed of MTOR and RPTOR, leading to phosphorylation and release of RPS6KB1 and binding of EIF4B to eIF-3. Identified in a HCV IRES-mediated translation complex, at least composed of EIF3C, IGF2BP1, RPS3 and HCV RNA-replicon. Interacts with ALKBH4, IFIT1 and IFIT2. Interacts with BZW2/5MP1. Post-translationally, phosphorylated. Phosphorylation is enhanced upon serum stimulation.

It localises to the cytoplasm. Functionally, component of the eukaryotic translation initiation factor 3 (eIF-3) complex, which is required for several steps in the initiation of protein synthesis. The eIF-3 complex associates with the 40S ribosome and facilitates the recruitment of eIF-1, eIF-1A, eIF-2:GTP:methionyl-tRNAi and eIF-5 to form the 43S pre-initiation complex (43S PIC). The eIF-3 complex stimulates mRNA recruitment to the 43S PIC and scanning of the mRNA for AUG recognition. The eIF-3 complex is also required for disassembly and recycling of post-termination ribosomal complexes and subsequently prevents premature joining of the 40S and 60S ribosomal subunits prior to initiation. The eIF-3 complex specifically targets and initiates translation of a subset of mRNAs involved in cell proliferation, including cell cycling, differentiation and apoptosis, and uses different modes of RNA stem-loop binding to exert either translational activation or repression. In Homo sapiens (Human), this protein is Eukaryotic translation initiation factor 3 subunit C.